A 139-amino-acid chain; its full sequence is Peptide methionine sulfoxide reductase MsrB (139 aa).

The 123-residue stretch at Thr9–Asp131 folds into the MsrB domain. Zn(2+) is bound by residues Cys48, Cys51, Cys97, and Cys100. The active-site Nucleophile is Cys120.

It belongs to the MsrB Met sulfoxide reductase family. Zn(2+) serves as cofactor.

The catalysed reaction is L-methionyl-[protein] + [thioredoxin]-disulfide + H2O = L-methionyl-(R)-S-oxide-[protein] + [thioredoxin]-dithiol. This is Peptide methionine sulfoxide reductase MsrB from Pectobacterium atrosepticum (strain SCRI 1043 / ATCC BAA-672) (Erwinia carotovora subsp. atroseptica).